The chain runs to 375 residues: 23S rRNA (uracil(747)-C(5))-methyltransferase RlmC (375 aa).

[4Fe-4S] cluster-binding residues include Cys-3, Cys-11, Cys-14, and Cys-87. Positions 212, 241, 262, and 307 each coordinate S-adenosyl-L-methionine. Residue Cys-334 is the Nucleophile of the active site.

Belongs to the class I-like SAM-binding methyltransferase superfamily. RNA M5U methyltransferase family. RlmC subfamily.

It catalyses the reaction uridine(747) in 23S rRNA + S-adenosyl-L-methionine = 5-methyluridine(747) in 23S rRNA + S-adenosyl-L-homocysteine + H(+). Catalyzes the formation of 5-methyl-uridine at position 747 (m5U747) in 23S rRNA. This chain is 23S rRNA (uracil(747)-C(5))-methyltransferase RlmC, found in Escherichia coli (strain SMS-3-5 / SECEC).